Consider the following 289-residue polypeptide: MVVVTGREPDSRHSDGAMSSSEAEDDFLEPATPTATQAGHGLPLLPQEFPEVVPLNIGGAHFTTRLSTLRRYEDTMLAAMFSGRHYIPTDSEGRYFIDRDGTHFGDVLNFLRSGDLPPREHVRAVHKEAQYYAIGPLLEQLENMQPLKGEKVRQAFLGLMPYYKDHLERIVEIARLRAVQRKARFAKLKVCVFKEEMPITPYECPLLNSLRFERSESDGQLFEHHCEVDVSFGPWEAVADVYDLLHCLVTDLSAQGLTVDHQCIGVCDKHLVNHYYCKRPIYEFKITWW.

The disordered stretch occupies residues 1-42 (MVVVTGREPDSRHSDGAMSSSEAEDDFLEPATPTATQAGHGL). Residues 53–141 (VPLNIGGAHF…YAIGPLLEQL (89 aa)) form the BTB domain.

Interacts with CUL3. In terms of tissue distribution, high expression in brain, particularly in post-mitotic neurons. Expressed in the mitral cells of the olfactory bulbs, the hippocampus, the deep layers of the cerebral cortex and Purkinje cells of the cerebellum. Not detected in astrocytes or microglial cells. Also expressed in heart, liver, spleen and kidney.

Its subcellular location is the cell membrane. It is found in the cytoplasm. The protein localises to the cytosol. In terms of biological role, may be involved in the control of excitability of cortical neurons. The polypeptide is BTB/POZ domain-containing protein KCTD7 (Kctd7) (Mus musculus (Mouse)).